A 446-amino-acid chain; its full sequence is Sensor-type histidine kinase PrrB (446 aa).

The next 2 helical transmembrane spans lie at valine 19–valine 39 and leucine 151–phenylalanine 171. Residues alanine 172–asparagine 222 enclose the HAMP domain. The region spanning valine 237–serine 446 is the Histidine kinase domain. Histidine 240 carries the phosphohistidine; by autocatalysis modification.

Autophosphorylated.

Its subcellular location is the cell membrane. It carries out the reaction ATP + protein L-histidine = ADP + protein N-phospho-L-histidine.. Its function is as follows. Member of the two-component regulatory system PrrB/PrrA that is involved specifically in early intracellular multiplication of Mycobacterium and is essential for its viability. Functions as a sensor protein kinase which is autophosphorylated at a histidine residue and transfers its phosphate group to the conserved aspartic acid residue in the regulatory domain of PrrA. In turn, PrrA binds to the upstream promoter regions of target genes including itself to positively regulate their expression. This chain is Sensor-type histidine kinase PrrB (prrB), found in Mycobacterium bovis (strain ATCC BAA-935 / AF2122/97).